The sequence spans 362 residues: Golgi-resident adenosine 3',5'-bisphosphate 3'-phosphatase (362 aa).

Residue M1 is modified to N-acetylmethionine. The Cytoplasmic segment spans residues 1-12 (MAPMGIRLSPLG). The helical transmembrane segment at 13–33 (VAVFCLLGLGVLYHLYSGFLA) threads the bilayer. Over 34-362 (GRFSLFGLGG…LPDLEKTGHK (329 aa)) the chain is Lumenal. Residues 88-109 (RESNVLHEKSKGKTREGADDKM) form a disordered region. D113 serves as the catalytic Proton acceptor. E136, D177, L179, and D180 together coordinate Mg(2+). T182 acts as the Proton acceptor in catalysis. Residues S245 and H248 each coordinate AMP. N-linked (GlcNAc...) asparagine glycosylation occurs at N262. 2 residues coordinate AMP: G271 and K275. Residue D303 coordinates Mg(2+).

The protein belongs to the inositol monophosphatase superfamily. Mg(2+) serves as cofactor. Contains N-linked glycan resistant to endoglycosydase H.

It localises to the golgi apparatus. The protein localises to the trans-Golgi network membrane. The catalysed reaction is adenosine 3',5'-bisphosphate + H2O = AMP + phosphate. It participates in sulfur metabolism. With respect to regulation, strongly inhibited by lithium. Its function is as follows. Exhibits 3'-nucleotidase activity toward adenosine 3',5'-bisphosphate (PAP), namely hydrolyzes adenosine 3',5'-bisphosphate into adenosine 5'-monophosphate (AMP) and a phosphate. May play a role in the formation of skeletal elements derived through endochondral ossification, possibly by clearing adenosine 3',5'-bisphosphate produced by Golgi sulfotransferases during glycosaminoglycan sulfation. Has no activity toward 3'-phosphoadenosine 5'-phosphosulfate (PAPS) or inositol phosphate (IP) substrates including I(1)P, I(1,4)P2, I(1,3,4)P3, I(1,4,5)P3 and I(1,3,4,5)P4. The protein is Golgi-resident adenosine 3',5'-bisphosphate 3'-phosphatase (BPNT2) of Bos taurus (Bovine).